The chain runs to 615 residues: 1-deoxy-D-xylulose-5-phosphate synthase (615 aa).

Thiamine diphosphate contacts are provided by residues His-72 and 113–115 (GHA). Mg(2+) is bound at residue Asp-144. Thiamine diphosphate is bound by residues 145–146 (GA), Asn-173, Tyr-281, and Glu-360. Asn-173 contacts Mg(2+).

It belongs to the transketolase family. DXPS subfamily. As to quaternary structure, homodimer. Mg(2+) serves as cofactor. Thiamine diphosphate is required as a cofactor.

The catalysed reaction is D-glyceraldehyde 3-phosphate + pyruvate + H(+) = 1-deoxy-D-xylulose 5-phosphate + CO2. It functions in the pathway metabolic intermediate biosynthesis; 1-deoxy-D-xylulose 5-phosphate biosynthesis; 1-deoxy-D-xylulose 5-phosphate from D-glyceraldehyde 3-phosphate and pyruvate: step 1/1. Catalyzes the acyloin condensation reaction between C atoms 2 and 3 of pyruvate and glyceraldehyde 3-phosphate to yield 1-deoxy-D-xylulose-5-phosphate (DXP). The protein is 1-deoxy-D-xylulose-5-phosphate synthase of Thermus thermophilus (strain ATCC 27634 / DSM 579 / HB8).